Consider the following 120-residue polypeptide: Phosphoribosyl-ATP pyrophosphatase (120 aa).

This sequence belongs to the PRA-PH family.

Its subcellular location is the cytoplasm. It carries out the reaction 1-(5-phospho-beta-D-ribosyl)-ATP + H2O = 1-(5-phospho-beta-D-ribosyl)-5'-AMP + diphosphate + H(+). The protein operates within amino-acid biosynthesis; L-histidine biosynthesis; L-histidine from 5-phospho-alpha-D-ribose 1-diphosphate: step 2/9. The protein is Phosphoribosyl-ATP pyrophosphatase of Methylibium petroleiphilum (strain ATCC BAA-1232 / LMG 22953 / PM1).